A 352-amino-acid chain; its full sequence is Chorismate synthase (352 aa).

Arg-48 contributes to the NADP(+) binding site. Residues 125–127 (RSS), 238–239 (NA), Gly-278, 293–297 (KPTSS), and Arg-319 each bind FMN.

It belongs to the chorismate synthase family. As to quaternary structure, homotetramer. FMNH2 serves as cofactor.

It catalyses the reaction 5-O-(1-carboxyvinyl)-3-phosphoshikimate = chorismate + phosphate. It functions in the pathway metabolic intermediate biosynthesis; chorismate biosynthesis; chorismate from D-erythrose 4-phosphate and phosphoenolpyruvate: step 7/7. In terms of biological role, catalyzes the anti-1,4-elimination of the C-3 phosphate and the C-6 proR hydrogen from 5-enolpyruvylshikimate-3-phosphate (EPSP) to yield chorismate, which is the branch point compound that serves as the starting substrate for the three terminal pathways of aromatic amino acid biosynthesis. This reaction introduces a second double bond into the aromatic ring system. In Legionella pneumophila subsp. pneumophila (strain Philadelphia 1 / ATCC 33152 / DSM 7513), this protein is Chorismate synthase.